Consider the following 480-residue polypeptide: Zinc finger protein ztf-16 (480 aa).

The C2H2-type 1 zinc-finger motif lies at 5–27; it reads NACTECGFTTTVFSEFQGHIEKH. The disordered stretch occupies residues 25–75; the sequence is EKHENEHSRSSSGEMSNSQTIEWGDGIQSSTPSPRSTPPSDPTPSPDSDEH. The span at 34 to 45 shows a compositional bias: polar residues; the sequence is SSSGEMSNSQTI. Over residues 59 to 69 the composition is skewed to pro residues; it reads RSTPPSDPTPS. 5 consecutive C2H2-type zinc fingers follow at residues 103–125, 133–155, 161–183, 190–215, and 223–246; these read HVCPHCNFTTCMSQHMKSHLEAH, YQCDICKMQFSQKANMHRHRMRH, YECRFCKKRFFRKDQMQEHSMTH, FDCPVSQCNMQFSQHNALRAHLEETH, and ASCKRCNLMFANSRRLLLHFQTRH. 3 disordered regions span residues 243-275, 290-311, and 376-417; these read QTRHDDSESSPKKENTPKRKKLSNGNALPMDPA, EFSPPNTDTSDNSTSSEFDKIP, and TSSS…KEDE. Residues 244–259 show a composition bias toward basic and acidic residues; the sequence is TRHDDSESSPKKENTP. Low complexity-rich tracts occupy residues 292 to 305 and 376 to 403; these read SPPNTDTSDNSTSS and TSSSVSVSAPSPSEQSHSPPANESSLSL. Residues 404 to 413 are compositionally biased toward basic and acidic residues; that stretch reads TEKEKSPTPE. 2 C2H2-type zinc fingers span residues 420-442 and 448-472; these read VECCHCGMMFYDNTMYLLHKSLH and FKCALCGTQCGEKYMFTTHVIFADH.

This sequence belongs to the Ikaros C2H2-type zinc-finger protein family. In terms of tissue distribution, expressed in the somatic gonad, hypodermis and cells in the head and tail. Expressed in amphid and phasmid sheath glia, amphid and phasmid socket glia, and in neurons in the head.

It is found in the nucleus. In terms of biological role, positively regulates the expression of ver-1 in the amphid sheath glia of amphid sensory neurons. Together with ehn-3, plays a role in somatic gonad development and is required for proper gonadal primordium assembly and somatic gonad precursor cell morphology. The chain is Zinc finger protein ztf-16 from Caenorhabditis elegans.